The primary structure comprises 68 residues: Large ribosomal subunit protein bL33c (68 aa).

This sequence belongs to the bacterial ribosomal protein bL33 family.

It localises to the plastid. The protein is Large ribosomal subunit protein bL33c of Cuscuta reflexa (Southern Asian dodder).